Reading from the N-terminus, the 550-residue chain is Leucine-rich repeat, immunoglobulin-like domain and transmembrane domain-containing protein 2 (550 aa).

The N-terminal stretch at 1-19 (MASVFHYFLLVLVFLDTHA) is a signal peptide. Positions 23-54 (FCLPGCTCSEESFGRTLQCTSVSLGKIPGNLS) constitute an LRRNT domain. A glycan (N-linked (GlcNAc...) asparagine) is linked at Asn-52. LRR repeat units lie at residues 80-103 (TLEY…EHLP), 104-125 (ELRE…AFRA), 128-149 (LLRV…ALQF), and 152-173 (SLTY…VFLN). The LRRCT domain maps to 200–252 (NPWVCDCRLRGLVQFVKSITLPVILVNSYLICQGPLSKAGQLFHETELSACMK). Residues 253–341 (PQISTPSANI…SIGKSNLVIS (89 aa)) form the Ig-like domain. The cysteines at positions 274 and 327 are disulfide-linked. Residues 361-451 (EGNAYIDLRV…QGQCVAFVTG (91 aa)) enclose the Fibronectin type-III domain. Residues 466–486 (VTVVLCVVLLAVPVGAYAWAA) traverse the membrane as a helical segment. The segment at 508–550 (SCTPAAPQSKDGSFREHPAVCDDGEGHIDTEGDKEKGGTEDNS) is disordered. Positions 519–550 (GSFREHPAVCDDGEGHIDTEGDKEKGGTEDNS) are enriched in basic and acidic residues.

Interacts with LRIT1; may form a heterodimer with LRIT1.

Its subcellular location is the membrane. The protein is Leucine-rich repeat, immunoglobulin-like domain and transmembrane domain-containing protein 2 (LRIT2) of Homo sapiens (Human).